Reading from the N-terminus, the 184-residue chain is ATP synthase subunit delta (184 aa).

Belongs to the ATPase delta chain family. F-type ATPases have 2 components, F(1) - the catalytic core - and F(0) - the membrane proton channel. F(1) has five subunits: alpha(3), beta(3), gamma(1), delta(1), epsilon(1). CF(0) has four main subunits: a(1), b(1), b'(1) and c(10-14). The alpha and beta chains form an alternating ring which encloses part of the gamma chain. F(1) is attached to F(0) by a central stalk formed by the gamma and epsilon chains, while a peripheral stalk is formed by the delta, b and b' chains.

The protein resides in the cellular thylakoid membrane. F(1)F(0) ATP synthase produces ATP from ADP in the presence of a proton or sodium gradient. F-type ATPases consist of two structural domains, F(1) containing the extramembraneous catalytic core and F(0) containing the membrane proton channel, linked together by a central stalk and a peripheral stalk. During catalysis, ATP synthesis in the catalytic domain of F(1) is coupled via a rotary mechanism of the central stalk subunits to proton translocation. Functionally, this protein is part of the stalk that links CF(0) to CF(1). It either transmits conformational changes from CF(0) to CF(1) or is implicated in proton conduction. In Nostoc punctiforme (strain ATCC 29133 / PCC 73102), this protein is ATP synthase subunit delta.